Here is a 152-residue protein sequence, read N- to C-terminus: SsrA-binding protein (152 aa).

This sequence belongs to the SmpB family.

Its subcellular location is the cytoplasm. Its function is as follows. Required for rescue of stalled ribosomes mediated by trans-translation. Binds to transfer-messenger RNA (tmRNA), required for stable association of tmRNA with ribosomes. tmRNA and SmpB together mimic tRNA shape, replacing the anticodon stem-loop with SmpB. tmRNA is encoded by the ssrA gene; the 2 termini fold to resemble tRNA(Ala) and it encodes a 'tag peptide', a short internal open reading frame. During trans-translation Ala-aminoacylated tmRNA acts like a tRNA, entering the A-site of stalled ribosomes, displacing the stalled mRNA. The ribosome then switches to translate the ORF on the tmRNA; the nascent peptide is terminated with the 'tag peptide' encoded by the tmRNA and targeted for degradation. The ribosome is freed to recommence translation, which seems to be the essential function of trans-translation. This Helicobacter pylori (strain J99 / ATCC 700824) (Campylobacter pylori J99) protein is SsrA-binding protein.